Consider the following 168-residue polypeptide: Transcription elongation factor GreB (168 aa).

Belongs to the GreA/GreB family. GreB subfamily.

Necessary for efficient RNA polymerase transcription elongation past template-encoded arresting sites. The arresting sites in DNA have the property of trapping a certain fraction of elongating RNA polymerases that pass through, resulting in locked ternary complexes. Cleavage of the nascent transcript by cleavage factors such as GreA or GreB allows the resumption of elongation from the new 3'terminus. GreB releases sequences of up to 9 nucleotides in length. The chain is Transcription elongation factor GreB from Xanthomonas axonopodis pv. citri (strain 306).